A 119-amino-acid polypeptide reads, in one-letter code: Beta-2-microglobulin (119 aa).

A signal peptide spans 1 to 20 (MARSVVVSLFVLLALAGLEA). An Ig-like C1-type domain is found at 25–114 (PKIQVYSRHP…VTFQTPKTVK (90 aa)).

It belongs to the beta-2-microglobulin family. In terms of assembly, heterodimer of an alpha chain and a beta chain. Beta-2-microglobulin is the beta-chain of major histocompatibility complex class I molecules.

Its subcellular location is the secreted. In terms of biological role, component of the class I major histocompatibility complex (MHC). Involved in the presentation of peptide antigens to the immune system. In Brachyteles arachnoides (Southern muriqui), this protein is Beta-2-microglobulin (B2M).